We begin with the raw amino-acid sequence, 302 residues long: tRNA-cytidine(32) 2-sulfurtransferase (302 aa).

The short motif at 45–50 (SGGKDS) is the PP-loop motif element. 3 residues coordinate [4Fe-4S] cluster: Cys-120, Cys-123, and Cys-211.

Belongs to the TtcA family. Homodimer. The cofactor is Mg(2+). Requires [4Fe-4S] cluster as cofactor.

The protein resides in the cytoplasm. It carries out the reaction cytidine(32) in tRNA + S-sulfanyl-L-cysteinyl-[cysteine desulfurase] + AH2 + ATP = 2-thiocytidine(32) in tRNA + L-cysteinyl-[cysteine desulfurase] + A + AMP + diphosphate + H(+). Its pathway is tRNA modification. Its function is as follows. Catalyzes the ATP-dependent 2-thiolation of cytidine in position 32 of tRNA, to form 2-thiocytidine (s(2)C32). The sulfur atoms are provided by the cysteine/cysteine desulfurase (IscS) system. The sequence is that of tRNA-cytidine(32) 2-sulfurtransferase from Aeromonas salmonicida (strain A449).